A 224-amino-acid chain; its full sequence is 3-dehydroquinate dehydratase (224 aa).

3-dehydroquinate-binding positions include 30 to 32 (EWR) and R62. The Proton donor/acceptor role is filled by H118. K143 (schiff-base intermediate with substrate) is an active-site residue. 3 residues coordinate 3-dehydroquinate: R186, S205, and Q209.

It belongs to the type-I 3-dehydroquinase family. As to quaternary structure, homodimer.

The catalysed reaction is 3-dehydroquinate = 3-dehydroshikimate + H2O. Its pathway is metabolic intermediate biosynthesis; chorismate biosynthesis; chorismate from D-erythrose 4-phosphate and phosphoenolpyruvate: step 3/7. Its function is as follows. Involved in the third step of the chorismate pathway, which leads to the biosynthesis of aromatic amino acids. Catalyzes the cis-dehydration of 3-dehydroquinate (DHQ) and introduces the first double bond of the aromatic ring to yield 3-dehydroshikimate. This chain is 3-dehydroquinate dehydratase, found in Streptococcus suis (strain 98HAH33).